The chain runs to 517 residues: Protein ERGIC-53 (517 aa).

The signal sequence occupies residues 1 to 30; that stretch reads MAVSRRRGPQAGAQSFFCALLLSFSQFVGS. Residues 31 to 484 are Lumenal-facing; the sequence is DGMGGDAAAP…DLPAFPSCLS (454 aa). Residues 52-275 enclose the L-type lectin-like domain; that stretch reads RRFEYKYSFK…DVLSFLTFQL (224 aa). A carbohydrate contacts are provided by Ser96 and Asp129. Residues Asp160, Phe162, Asp163, Asn164, Asp165, Asn169, and Asn170 each contribute to the Ca(2+) site. Position 164 (Asn164) interacts with a carbohydrate. His186 is a binding site for a carbohydrate. A Ca(2+)-binding site is contributed by Asp189. Cys198 and Cys238 are disulfide-bonded. A carbohydrate is bound at residue 259–261; it reads GGL. Disordered stretches follow at residues 276–297 and 377–396; these read TEPG…KEKY and EISR…SQQE. The segment covering 278 to 297 has biased composition (basic and acidic residues); that stretch reads PGKEPPTPEKDISEKEKEKY. Ser433 carries the phosphoserine modification. A helical membrane pass occupies residues 485 to 505; the sequence is TVHFVIFIVVQTVLFIGYIMY. Residues 506-517 are Cytoplasmic-facing; it reads RTQQEAAAKKFF. A mediates interaction with RAB3GAP1, RAB3GAP2 and UBXN6 region spans residues 506–517; it reads RTQQEAAAKKFF. The ER export motif motif lies at 516 to 517; sequence FF.

In terms of assembly, exists both as a covalent disulfide-linked homohexamer, and a complex of three disulfide-linked dimers non-covalently kept together. Interacts with MCFD2. May interact with TMEM115. Interacts with RAB3GAP1 and RAB3GAP2. Interacts with UBXN6. Interacts with SERPINA1/alpha1-antitrypsin. Interacts with BET1.

The protein resides in the endoplasmic reticulum-Golgi intermediate compartment membrane. The protein localises to the golgi apparatus membrane. It localises to the endoplasmic reticulum membrane. Functionally, mannose-specific lectin. May recognize sugar residues of glycoproteins, glycolipids, or glycosylphosphatidyl inositol anchors and may be involved in the sorting or recycling of proteins, lipids, or both. The LMAN1-MCFD2 complex forms a specific cargo receptor for the ER-to-Golgi transport of selected proteins. The polypeptide is Protein ERGIC-53 (Lman1) (Rattus norvegicus (Rat)).